A 389-amino-acid chain; its full sequence is MSAPPKENIGLPVSEFVQMNNLACESVGGKVLFATDDCFAPAENLLKKKDPEFKPGLFTEFGKWMDGWETRRKRIPGHDWCIIELGVPGIIHGFEADTRFFTGNYAPRISVQAACLKPEEITFQPRKDKIGTAASIEEYKSADKLKSEKWSHLLQMTELTPGYAESSHSYFNVNSKQRWTHLRLNIYPDGGIARFKVYGIGQRDWSSCKPNDLEDLLSMVNGGVCLGFSDAHYGHPRNLIGIGRACDMGDGWETARRLDRPPVLKADSKGILQVPGFEWAVLKLGHPGLVTHIEIDTNHFKGNSPNSCKIDACALTPTEEEGVKRDERFEIGYNWKPLLSVTQIHPHKRRYVESTSLALHQVISHVKITIAPDGGVSRIRLWGFPRPLP.

The protein belongs to the allantoicase family.

The catalysed reaction is allantoate + H2O = (S)-ureidoglycolate + urea. Its pathway is nitrogen metabolism; (S)-allantoin degradation; (S)-ureidoglycolate from allantoate (aminidohydrolase route): step 1/1. Its function is as follows. Utilization of purines as secondary nitrogen sources, when primary sources are limiting. The polypeptide is Allantoicase (allc) (Xenopus tropicalis (Western clawed frog)).